The primary structure comprises 197 residues: Surfactant protein C (197 aa).

Positions 1 to 23 (MDVGSKEVLMESPPDYSAAPRGR) are excised as a propeptide. S-palmitoyl cysteine attachment occurs at residues Cys-28 and Cys-29. Residues 59–197 (HMSQKHTEMV…LCGEVPLYYI (139 aa)) constitute a propeptide that is removed on maturation. The BRICHOS domain occupies 94 to 197 (FSIGSTGLVV…LCGEVPLYYI (104 aa)). 2 cysteine pairs are disulfide-bonded: Cys-120–Cys-148 and Cys-121–Cys-189.

It localises to the secreted. Its subcellular location is the extracellular space. It is found in the surface film. Functionally, pulmonary surfactant associated proteins promote alveolar stability by lowering the surface tension at the air-liquid interface in the peripheral air spaces. This is Surfactant protein C from Homo sapiens (Human).